Reading from the N-terminus, the 479-residue chain is Heparin cofactor 2 (479 aa).

Positions 1 to 23 (MKHPAYTLLLSLIMSMCAGSKGL) are cleaved as a signal peptide. An N-linked (GlcNAc...) asparagine glycan is attached at asparagine 31. Repeat copies occupy residues 55–65 (GEEDDDYLDLE) and 69–79 (SEDDDYIYVVD). The 2 X 11 AA approximate repeats, Asp/Glu-rich (acidic) (hirudin-like) stretch occupies residues 55–79 (GEEDDDYLDLEKLLSEDDDYIYVVD). A sulfotyrosine mark is found at tyrosine 61 and tyrosine 74. Asparagine 168 carries an N-linked (GlcNAc...) asparagine glycan. A glycosaminoglycan-binding site region spans residues 172–192 (KYEVTTIHNLFRKLTHRLFRR). Asparagine 367 and asparagine 403 each carry an N-linked (GlcNAc...) asparagine glycan.

Belongs to the serpin family. In terms of processing, different composition of the N-linked oligosaccharides appears to yield a 68-kDa and a 72-kDa form.

Thrombin inhibitor activated by the glycosaminoglycans, heparin or dermatan sulfate. In the presence of the latter, HC-II becomes the predominant thrombin inhibitor in place of antithrombin III (AT). The polypeptide is Heparin cofactor 2 (Serpind1) (Rattus norvegicus (Rat)).